The sequence spans 38 residues: Large ribosomal subunit protein bL36 (38 aa).

The protein belongs to the bacterial ribosomal protein bL36 family.

The protein is Large ribosomal subunit protein bL36 of Baumannia cicadellinicola subsp. Homalodisca coagulata.